Here is a 148-residue protein sequence, read N- to C-terminus: Cofilin/actin-depolymerizing factor homolog (148 aa).

Positions 4–143 (GVTVSDVCKT…SREAVEEKLR (140 aa)) constitute an ADF-H domain. The Nuclear localization signal signature appears at 19-23 (KKDKK).

Belongs to the actin-binding proteins ADF family. In terms of processing, phosphorylated in vitro by protein kinase LIMK1. Phosphorylation is required for inactivation of tsr and for cell proliferation and axon growth. Phosphorylation is negatively regulated by the panthothenate kinase fbl which catalyzes the first step in the conversion of panthothenic acid to coenzyme A. Dephosphorylated by protein phosphatase ssh which activates tsr.

The protein resides in the cytoplasm. It localises to the cytoskeleton. Its subcellular location is the nucleus matrix. Exhibits F-actin depolymerizing activity and regulates actin cytoskeleton dynamics. Required for cytokinesis in both mitotic and meiotic cells and for aster migration and separation. Promotes cell motility during ovary development and oogenesis. During larval development, required for the cell rearrangement needed for formation of terminal filaments which are stacks of somatic cells that are important for the initiation of ovarioles. Also required for border cell migration during oogenesis. During border cell migration, required for actin turnover and lamellipodial protrusion. Required for the establishment of planar cell polarity (PCP) where cells adopt a uniform orientation within the plane of an epithelium. During establishment of PCP, required for the redistribution of the PCP core proteins fz and stan/fmi to the proximodistal cell boundary. During pupal development, required for elongation of the retinal cell body and for rhabdomere morphogenesis. Required for mushroom body neuroblast proliferation and axon growth. Plays a role in the positive regulation of protein secretion. Plays a role in the regulation of nuclear localization of actin. Required for the maintenance of epithelial integrity by controlling cell junctions and is also necessary for cell survival and tissue growth through regulation of JNK and yki signaling. The polypeptide is Cofilin/actin-depolymerizing factor homolog (Drosophila melanogaster (Fruit fly)).